The following is a 326-amino-acid chain: Glyoxylate/hydroxypyruvate reductase B (326 aa).

Catalysis depends on residues R237 and E266. Residue H285 is the Proton donor of the active site.

It belongs to the D-isomer specific 2-hydroxyacid dehydrogenase family. GhrB subfamily. Homodimer.

The protein resides in the cytoplasm. The catalysed reaction is glycolate + NADP(+) = glyoxylate + NADPH + H(+). It carries out the reaction (R)-glycerate + NAD(+) = 3-hydroxypyruvate + NADH + H(+). The enzyme catalyses (R)-glycerate + NADP(+) = 3-hydroxypyruvate + NADPH + H(+). Functionally, catalyzes the NADPH-dependent reduction of glyoxylate and hydroxypyruvate into glycolate and glycerate, respectively. The chain is Glyoxylate/hydroxypyruvate reductase B from Yersinia pestis bv. Antiqua (strain Nepal516).